Reading from the N-terminus, the 145-residue chain is NADH-quinone oxidoreductase subunit A (145 aa).

A run of 3 helical transmembrane segments spans residues 14–34 (FAVFLLSALGLCVFMLTGGFL), 66–86 (FYLVAMFFVIFDVETLYLYAW), and 96–116 (VGFIEATIFILILLAGLVYLV).

This sequence belongs to the complex I subunit 3 family. In terms of assembly, NDH-1 is composed of 13 different subunits. Subunits NuoA, H, J, K, L, M, N constitute the membrane sector of the complex.

The protein resides in the cell inner membrane. The enzyme catalyses a quinone + NADH + 5 H(+)(in) = a quinol + NAD(+) + 4 H(+)(out). Its function is as follows. NDH-1 shuttles electrons from NADH, via FMN and iron-sulfur (Fe-S) centers, to quinones in the respiratory chain. The immediate electron acceptor for the enzyme in this species is believed to be ubiquinone. Couples the redox reaction to proton translocation (for every two electrons transferred, four hydrogen ions are translocated across the cytoplasmic membrane), and thus conserves the redox energy in a proton gradient. The polypeptide is NADH-quinone oxidoreductase subunit A (Sodalis glossinidius (strain morsitans)).